The following is a 156-amino-acid chain: Small ribosomal subunit protein uS7 (156 aa).

This sequence belongs to the universal ribosomal protein uS7 family. As to quaternary structure, part of the 30S ribosomal subunit. Contacts proteins S9 and S11.

One of the primary rRNA binding proteins, it binds directly to 16S rRNA where it nucleates assembly of the head domain of the 30S subunit. Is located at the subunit interface close to the decoding center, probably blocks exit of the E-site tRNA. In Alkalilimnicola ehrlichii (strain ATCC BAA-1101 / DSM 17681 / MLHE-1), this protein is Small ribosomal subunit protein uS7.